We begin with the raw amino-acid sequence, 157 residues long: Small ribosomal subunit protein uS7 (157 aa).

It belongs to the universal ribosomal protein uS7 family. Part of the 30S ribosomal subunit. Contacts proteins S9 and S11.

One of the primary rRNA binding proteins, it binds directly to 16S rRNA where it nucleates assembly of the head domain of the 30S subunit. Is located at the subunit interface close to the decoding center, probably blocks exit of the E-site tRNA. The chain is Small ribosomal subunit protein uS7 from Polaromonas naphthalenivorans (strain CJ2).